A 471-amino-acid chain; its full sequence is Protein translocase subunit SecF (471 aa).

The segment at 1–29 (MVSRAKVGAETTKGIDEPDRNDNTDDNGA) is disordered. A compositionally biased stretch (basic and acidic residues) spans 13–23 (KGIDEPDRNDN). 6 helical membrane passes run 88–108 (GGVI…TFGI), 211–231 (ITKK…LYIT), 242–262 (ALTT…LVGF), 267–287 (ATVI…VIVF), 325–345 (LISV…LGVG), and 355–375 (LVGI…LLVT). The tract at residues 393–471 (RRTLGSQVGK…TGKRNNVGRR (79 aa)) is disordered. The span at 415–431 (KPQNQAESCADASSQEG) shows a compositional bias: polar residues. Positions 448-460 (PGVRPVRPTGTRR) are enriched in low complexity. The span at 461–471 (PTGKRNNVGRR) shows a compositional bias: basic residues.

Belongs to the SecD/SecF family. SecF subfamily. As to quaternary structure, forms a complex with SecD. Part of the essential Sec protein translocation apparatus which comprises SecA, SecYEG and auxiliary proteins SecDF. Other proteins may also be involved.

It is found in the cell membrane. Part of the Sec protein translocase complex. Interacts with the SecYEG preprotein conducting channel. SecDF uses the proton motive force (PMF) to complete protein translocation after the ATP-dependent function of SecA. This Mycobacterium leprae (strain TN) protein is Protein translocase subunit SecF.